Here is a 280-residue protein sequence, read N- to C-terminus: Elongation factor Ts (280 aa).

The segment at threonine 79–valine 82 is involved in Mg(2+) ion dislocation from EF-Tu.

The protein belongs to the EF-Ts family.

The protein localises to the cytoplasm. Associates with the EF-Tu.GDP complex and induces the exchange of GDP to GTP. It remains bound to the aminoacyl-tRNA.EF-Tu.GTP complex up to the GTP hydrolysis stage on the ribosome. The sequence is that of Elongation factor Ts from Vibrio vulnificus (strain CMCP6).